Here is a 311-residue protein sequence, read N- to C-terminus: Olfactory receptor 5AN1 (311 aa).

The Extracellular portion of the chain corresponds to 1–26 (MTGGGNITEITYFILLGFSDFPRIIK). Residue N6 is glycosylated (N-linked (GlcNAc...) asparagine). Residues 27–47 (VLFTIFLVIYITSLAWNLSLI) form a helical membrane-spanning segment. Over 48–55 (VLIRMDSH) the chain is Cytoplasmic. A helical transmembrane segment spans residues 56–76 (LHTPMYFFLSNLSFIDVCYIS). Residues 77-100 (STVPKMLSNLLQEQQTITFVGCII) are Extracellular-facing. Residues C98 and C190 are joined by a disulfide bond. Residues 101 to 121 (QYFIFSTMGLSESCLMTAMAY) traverse the membrane as a helical segment. The Cytoplasmic portion of the chain corresponds to 122-134 (DRYAAICNPLLYS). Residues 135–155 (SIMSPTLCVWMVLGAYMTGLT) traverse the membrane as a helical segment. Over 156–197 (ASLFQIGALLQLHFCGSNVIRHFFCDMPQLLILSCTDTFFVQ) the chain is Extracellular. The helical transmembrane segment at 198 to 218 (VMTAILTMFFGIASALVIMIS) threads the bilayer. The Cytoplasmic portion of the chain corresponds to 219–238 (YGYIGISIMKITSAKGRSKA). The helical transmembrane segment at 239–259 (FNTCASHLTAVSLFYTSGIFV) threads the bilayer. Topologically, residues 260 to 272 (YLSSSSGGSSSFD) are extracellular. Residues 273–293 (RFASVFYTVVIPMLNPLIYSL) traverse the membrane as a helical segment. The Cytoplasmic segment spans residues 294 to 311 (RNKEIKDALKRLQKRKCC).

Belongs to the G-protein coupled receptor 1 family.

The protein resides in the cell membrane. In terms of biological role, odorant receptor for musk, which specifically recognizes muscone, musk xylol, and musk ketone. Ligand-binding causes a conformation change that triggers signaling via G(s)-class of G alpha protein GNAL, activating adenylyl cyclase. The polypeptide is Olfactory receptor 5AN1 (Homo sapiens (Human)).